The following is a 369-amino-acid chain: Methylthioribose-1-phosphate isomerase (369 aa).

Residues 54–56, Arg95, and Gln208 contribute to the substrate site; that span reads RGA. Asp249 (proton donor) is an active-site residue. A substrate-binding site is contributed by 259 to 260; sequence NK.

Belongs to the eIF-2B alpha/beta/delta subunits family. MtnA subfamily.

It catalyses the reaction 5-(methylsulfanyl)-alpha-D-ribose 1-phosphate = 5-(methylsulfanyl)-D-ribulose 1-phosphate. Its pathway is amino-acid biosynthesis; L-methionine biosynthesis via salvage pathway; L-methionine from S-methyl-5-thio-alpha-D-ribose 1-phosphate: step 1/6. Its function is as follows. Catalyzes the interconversion of methylthioribose-1-phosphate (MTR-1-P) into methylthioribulose-1-phosphate (MTRu-1-P). The chain is Methylthioribose-1-phosphate isomerase from Desulfosudis oleivorans (strain DSM 6200 / JCM 39069 / Hxd3) (Desulfococcus oleovorans).